Here is a 600-residue protein sequence, read N- to C-terminus: Proline--tRNA ligase (600 aa).

The protein belongs to the class-II aminoacyl-tRNA synthetase family. ProS type 1 subfamily. In terms of assembly, homodimer.

It is found in the cytoplasm. The catalysed reaction is tRNA(Pro) + L-proline + ATP = L-prolyl-tRNA(Pro) + AMP + diphosphate. Functionally, catalyzes the attachment of proline to tRNA(Pro) in a two-step reaction: proline is first activated by ATP to form Pro-AMP and then transferred to the acceptor end of tRNA(Pro). As ProRS can inadvertently accommodate and process non-cognate amino acids such as alanine and cysteine, to avoid such errors it has two additional distinct editing activities against alanine. One activity is designated as 'pretransfer' editing and involves the tRNA(Pro)-independent hydrolysis of activated Ala-AMP. The other activity is designated 'posttransfer' editing and involves deacylation of mischarged Ala-tRNA(Pro). The misacylated Cys-tRNA(Pro) is not edited by ProRS. This chain is Proline--tRNA ligase, found in Prochlorococcus marinus (strain MIT 9215).